We begin with the raw amino-acid sequence, 474 residues long: tRNA-2-methylthio-N(6)-dimethylallyladenosine synthase (474 aa).

An MTTase N-terminal domain is found at K3–G120. 6 residues coordinate [4Fe-4S] cluster: C12, C49, C83, C157, C161, and C164. Residues R143–Q375 form the Radical SAM core domain. Residues R378–R441 form the TRAM domain.

It belongs to the methylthiotransferase family. MiaB subfamily. In terms of assembly, monomer. The cofactor is [4Fe-4S] cluster.

It is found in the cytoplasm. The enzyme catalyses N(6)-dimethylallyladenosine(37) in tRNA + (sulfur carrier)-SH + AH2 + 2 S-adenosyl-L-methionine = 2-methylsulfanyl-N(6)-dimethylallyladenosine(37) in tRNA + (sulfur carrier)-H + 5'-deoxyadenosine + L-methionine + A + S-adenosyl-L-homocysteine + 2 H(+). In terms of biological role, catalyzes the methylthiolation of N6-(dimethylallyl)adenosine (i(6)A), leading to the formation of 2-methylthio-N6-(dimethylallyl)adenosine (ms(2)i(6)A) at position 37 in tRNAs that read codons beginning with uridine. The sequence is that of tRNA-2-methylthio-N(6)-dimethylallyladenosine synthase from Serratia proteamaculans (strain 568).